The following is a 379-amino-acid chain: Putative glutamate--cysteine ligase 2 (379 aa).

It belongs to the glutamate--cysteine ligase type 2 family. YbdK subfamily.

It carries out the reaction L-cysteine + L-glutamate + ATP = gamma-L-glutamyl-L-cysteine + ADP + phosphate + H(+). In terms of biological role, ATP-dependent carboxylate-amine ligase which exhibits weak glutamate--cysteine ligase activity. The polypeptide is Putative glutamate--cysteine ligase 2 (Mycobacterium avium (strain 104)).